A 239-amino-acid chain; its full sequence is Tetrahydromethanopterin S-methyltransferase subunit A (239 aa).

Residues Met1–Ser215 are Cytoplasmic-facing. A 5-hydroxybenzimidazolylcob(I)amide-binding site is contributed by His85. The helical transmembrane segment at Gly216–Leu238 threads the bilayer. Residue Leu239 is a topological domain, extracellular.

This sequence belongs to the MtrA family. In terms of assembly, the complex is composed of 8 subunits; MtrA, MtrB, MtrC, MtrD, MtrE, MtrF, MtrG and MtrH. 5-hydroxybenzimidazolylcob(I)amide is required as a cofactor.

It localises to the cell membrane. The enzyme catalyses 5-methyl-5,6,7,8-tetrahydromethanopterin + coenzyme M + 2 Na(+)(in) = 5,6,7,8-tetrahydromethanopterin + methyl-coenzyme M + 2 Na(+)(out). It functions in the pathway one-carbon metabolism; methanogenesis from CO(2); methyl-coenzyme M from 5,10-methylene-5,6,7,8-tetrahydromethanopterin: step 2/2. Part of a complex that catalyzes the formation of methyl-coenzyme M and tetrahydromethanopterin from coenzyme M and methyl-tetrahydromethanopterin. This is an energy-conserving, sodium-ion translocating step. The chain is Tetrahydromethanopterin S-methyltransferase subunit A from Methanococcus maripaludis (strain C7 / ATCC BAA-1331).